Here is a 260-residue protein sequence, read N- to C-terminus: UPF0246 protein Bmul_1054/BMULJ_02209 (260 aa).

The protein belongs to the UPF0246 family.

This chain is UPF0246 protein Bmul_1054/BMULJ_02209, found in Burkholderia multivorans (strain ATCC 17616 / 249).